The sequence spans 166 residues: KH homology domain-containing protein 1A (166 aa).

In terms of domain architecture, KH; atypical spans 19-78 (PLVFDMEEDKEDYIFGPHDEYLHTLEVHSNTLIQLERWFTPTGQTRVTVVGPLKARLWVM).

It belongs to the KHDC1 family.

Its subcellular location is the cytoplasm. Functionally, has pro-apoptotic activity. This Mus musculus (Mouse) protein is KH homology domain-containing protein 1A (Khdc1a).